The chain runs to 119 residues: Large ribosomal subunit protein bL19 (119 aa).

It belongs to the bacterial ribosomal protein bL19 family.

In terms of biological role, this protein is located at the 30S-50S ribosomal subunit interface and may play a role in the structure and function of the aminoacyl-tRNA binding site. This chain is Large ribosomal subunit protein bL19 (rplS), found in Mycoplasma genitalium (strain ATCC 33530 / DSM 19775 / NCTC 10195 / G37) (Mycoplasmoides genitalium).